The chain runs to 228 residues: Triosephosphate isomerase (228 aa).

Residue Asn11 to Lys13 participates in substrate binding. His95 acts as the Electrophile in catalysis. Glu143 functions as the Proton acceptor in the catalytic mechanism. Substrate-binding positions include Ile148, Gly183, and Ala204–Ser205.

This sequence belongs to the triosephosphate isomerase family. Homotetramer; dimer of dimers.

The protein resides in the cytoplasm. The catalysed reaction is D-glyceraldehyde 3-phosphate = dihydroxyacetone phosphate. It functions in the pathway carbohydrate biosynthesis; gluconeogenesis. It participates in carbohydrate degradation; glycolysis; D-glyceraldehyde 3-phosphate from glycerone phosphate: step 1/1. Functionally, involved in the gluconeogenesis. Catalyzes stereospecifically the conversion of dihydroxyacetone phosphate (DHAP) to D-glyceraldehyde-3-phosphate (G3P). This is Triosephosphate isomerase from Pyrococcus abyssi (strain GE5 / Orsay).